The sequence spans 139 residues: MEWAKWTPHEASNQTQASTLLGLLLGDHTEGRNDTNSTRALKVPDGTSAAWYILTIIGIYAVIFVFRLASNILRKNDKSLEDVYYSNLTSELKMTGLQGKVAKCSTLSISNRAVLQPCQAHLGAKGGSSGPQTATPETP.

The chain crosses the membrane as a helical span at residues 46–66 (GTSAAWYILTIIGIYAVIFVF).

The protein resides in the membrane. This chain is Small integral membrane protein 34, found in Homo sapiens (Human).